We begin with the raw amino-acid sequence, 127 residues long: Protein KRTCAP2 homolog (127 aa).

4 helical membrane-spanning segments follow: residues 13 to 33 (LISLILWVIIFALLNIGSNFF), 41 to 61 (ILGGFVGSFLFFLQMTFIGAI), 65 to 85 (VKLLETVLAVIITAMISSSVH), and 87 to 107 (VSGTTSIIFSIGWIFYLNHAS).

It belongs to the KRTCAP2 family. In terms of assembly, component of the oligosaccharyltransferase (OST) complex.

The protein localises to the membrane. Functionally, subunit of the oligosaccharyl transferase (OST) complex that catalyzes the initial transfer of a defined glycan (Glc(3)Man(9)GlcNAc(2) in eukaryotes) from the lipid carrier dolichol-pyrophosphate to an asparagine residue within an Asn-X-Ser/Thr consensus motif in nascent polypeptide chains, the first step in protein N-glycosylation. N-glycosylation occurs cotranslationally and the complex associates with the Sec61 complex at the channel-forming translocon complex that mediates protein translocation across the endoplasmic reticulum (ER). All subunits are required for a maximal enzyme activity. The sequence is that of Protein KRTCAP2 homolog from Dictyostelium discoideum (Social amoeba).